The following is a 63-amino-acid chain: Protein sigN172 (63 aa).

The polypeptide is Protein sigN172 (Dictyostelium discoideum (Social amoeba)).